The sequence spans 329 residues: Helicase VP6-A (329 aa).

Disordered regions lie at residues Asn28–Gly130 and Asp189–Pro232. Basic and acidic residues-rich tracts occupy residues Glu36–Glu58, Gly65–Ile83, and Ser96–Gly109. Lys110 contacts ATP. Gly residues predominate over residues Lys110 to Gly129. Basic and acidic residues-rich tracts occupy residues Asp189–Gly207 and His215–Pro232.

Belongs to the reoviruses VP6 family. Homohexamer.

Its subcellular location is the virion. The enzyme catalyses ATP + H2O = ADP + phosphate + H(+). ATP dependent RNA helicase essential for RNA packaging and viral transcription. Possesses ss- and dsRNA-binding capacity. The polypeptide is Helicase VP6-A (Segment-9) (Bluetongue virus 10 (isolate USA) (BTV 10)).